Reading from the N-terminus, the 297-residue chain is ATP phosphoribosyltransferase (297 aa).

This sequence belongs to the ATP phosphoribosyltransferase family.

The protein localises to the cytoplasm. It catalyses the reaction 1-(5-phospho-beta-D-ribosyl)-ATP + diphosphate = 5-phospho-alpha-D-ribose 1-diphosphate + ATP. Its pathway is amino-acid biosynthesis; L-histidine biosynthesis; L-histidine from 5-phospho-alpha-D-ribose 1-diphosphate: step 1/9. Its function is as follows. Catalyzes the condensation of ATP and 5-phosphoribose 1-diphosphate to form N'-(5'-phosphoribosyl)-ATP (PR-ATP). Has a crucial role in the pathway because the rate of histidine biosynthesis seems to be controlled primarily by regulation of the enzymatic activity. The sequence is that of ATP phosphoribosyltransferase (HIS1) from Eremothecium gossypii (strain ATCC 10895 / CBS 109.51 / FGSC 9923 / NRRL Y-1056) (Yeast).